The following is a 349-amino-acid chain: UDP-N-acetylenolpyruvoylglucosamine reductase (349 aa).

Positions G25–R197 constitute an FAD-binding PCMH-type domain. R173 is an active-site residue. Catalysis depends on S249, which acts as the Proton donor. The active site involves E345.

It belongs to the MurB family. FAD serves as cofactor.

It localises to the cytoplasm. The enzyme catalyses UDP-N-acetyl-alpha-D-muramate + NADP(+) = UDP-N-acetyl-3-O-(1-carboxyvinyl)-alpha-D-glucosamine + NADPH + H(+). Its pathway is cell wall biogenesis; peptidoglycan biosynthesis. Functionally, cell wall formation. This Burkholderia vietnamiensis (strain G4 / LMG 22486) (Burkholderia cepacia (strain R1808)) protein is UDP-N-acetylenolpyruvoylglucosamine reductase.